The primary structure comprises 590 residues: Neuronal PAS domain-containing protein 1 (590 aa).

Positions 45–98 constitute a bHLH domain; the sequence is QRKEKSRNAARSRRGKENLEFFELAKLLPLPGAISSQLDKASIVRLSVTYLRLR. In terms of domain architecture, PAS 1 spans 135-207; the sequence is EQHLGGHILQ…LGLRTPTPGP (73 aa). Positions 198–229 are disordered; it reads LGLRTPTPGPPTPPSVSSSSSSSSSLADTPEI. The span at 212–222 shows a compositional bias: low complexity; it reads SVSSSSSSSSS. One can recognise a PAS 2 domain in the interval 293 to 359; that stretch reads APLAELPLHG…IRQSHVDLLD (67 aa). Residues 365-408 enclose the PAC domain; it reads TGYYRWLQRAGGFVWLQSVATVAGSGKSPGEHHVLWVSHVLSQA. The tract at residues 425–494 is disordered; the sequence is ACEEASSPGP…SHPATPRPEF (70 aa). Residues 433–442 show a composition bias toward pro residues; the sequence is GPEPTEPEPP. Positions 463–476 are enriched in basic and acidic residues; the sequence is IKVEPGPRETKGSE.

As to quaternary structure, efficient DNA binding requires dimerization with another bHLH protein. Interacts with ARNT; forms a heterodimer that binds core DNA sequence 5'-[AG]CGTG-3' within the hypoxia response element (HRE) leading to a transcriptional repressor on its target gene TH.

It is found in the nucleus. Its function is as follows. May control regulatory pathways relevant to schizophrenia and to psychotic illness. May play a role in late central nervous system development by modulating EPO expression in response to cellular oxygen level. Forms a heterodimer that binds core DNA sequence 5'-TACGTG-3' within the hypoxia response element (HRE) leading to transcriptional repression on its target gene TH. The protein is Neuronal PAS domain-containing protein 1 (NPAS1) of Homo sapiens (Human).